The following is a 415-amino-acid chain: Histidine--tRNA ligase (415 aa).

This sequence belongs to the class-II aminoacyl-tRNA synthetase family. Homodimer.

It is found in the cytoplasm. The catalysed reaction is tRNA(His) + L-histidine + ATP = L-histidyl-tRNA(His) + AMP + diphosphate + H(+). This Clostridium botulinum (strain ATCC 19397 / Type A) protein is Histidine--tRNA ligase.